Reading from the N-terminus, the 31-residue chain is Photosystem II reaction center protein T (31 aa).

Residues 3–23 form a helical membrane-spanning segment; that stretch reads SFAYILILGLAIATLFFAIAF.

It belongs to the PsbT family. In terms of assembly, PSII is composed of 1 copy each of membrane proteins PsbA, PsbB, PsbC, PsbD, PsbE, PsbF, PsbH, PsbI, PsbJ, PsbK, PsbL, PsbM, PsbT, PsbX, PsbY, PsbZ, Psb30/Ycf12, peripheral proteins PsbO, CyanoQ (PsbQ), PsbU, PsbV and a large number of cofactors. It forms dimeric complexes.

Its subcellular location is the cellular thylakoid membrane. In terms of biological role, found at the monomer-monomer interface of the photosystem II (PS II) dimer, plays a role in assembly and dimerization of PSII. PSII is a light-driven water plastoquinone oxidoreductase, using light energy to abstract electrons from H(2)O, generating a proton gradient subsequently used for ATP formation. The protein is Photosystem II reaction center protein T of Synechococcus sp. (strain CC9311).